The sequence spans 267 residues: Kit ligand (267 aa).

Positions 1-25 are cleaved as a signal peptide; that stretch reads MKKTQTWIITCIYLQLLLFNPLVHT. Pyrrolidone carboxylic acid is present on glutamine 26. Residues 26-215 lie on the Extracellular side of the membrane; that stretch reads QGICRNRVTD…SNSIEDSSLQ (190 aa). 2 cysteine pairs are disulfide-bonded: cysteine 29/cysteine 114 and cysteine 68/cysteine 164. Asparagine 90, asparagine 97, asparagine 145, and asparagine 196 each carry an N-linked (GlcNAc...) asparagine glycan. Residues 216-238 form a helical membrane-spanning segment; that stretch reads WAAVALPAFFSLVIGFAFGALYW. Over 239–267 the chain is Cytoplasmic; sequence KKKQPNLTRTVENRQINEEDNEISMLQEK.

Belongs to the SCF family. In terms of assembly, homodimer, non-covalently linked. Heterotetramer with KIT, binding two KIT molecules; thereby mediates KIT dimerization and subsequent activation by autophosphorylation. In terms of processing, a soluble form is produced by proteolytic processing of the extracellular domain.

Its subcellular location is the cytoplasm. It is found in the cytoskeleton. The protein resides in the cell membrane. The protein localises to the cell projection. It localises to the lamellipodium. Its subcellular location is the filopodium. It is found in the secreted. Ligand for the receptor-type protein-tyrosine kinase KIT. Plays an essential role in the regulation of cell survival and proliferation, hematopoiesis, stem cell maintenance, gametogenesis, mast cell development, migration and function, and in melanogenesis. KITLG/SCF binding can activate several signaling pathways. Promotes phosphorylation of PIK3R1, the regulatory subunit of phosphatidylinositol 3-kinase, and subsequent activation of the kinase AKT1. KITLG/SCF and KIT also transmit signals via GRB2 and activation of RAS, RAF1 and the MAP kinases MAPK1/ERK2 and/or MAPK3/ERK1. KITLG/SCF and KIT promote activation of STAT family members STAT1, STAT3 and STAT5. KITLG/SCF and KIT promote activation of PLCG1, leading to the production of the cellular signaling molecules diacylglycerol and inositol 1,4,5-trisphosphate. KITLG/SCF acts synergistically with other cytokines, probably interleukins. This is Kit ligand (KITLG) from Ovis aries (Sheep).